The sequence spans 190 residues: Selenoprotein S (190 aa).

Residues 28–48 form a helical membrane-spanning segment; that stretch reads SLLASYGWYILFSCVLLYIVI. The VCP/p97-interacting motif (VIM) stretch occupies residues 78–90; sequence RQEALAAARLRMQ. A disordered region spans residues 96-190; sequence QVEKHKEKQR…RRGPSSGGUS (95 aa). The span at 97–118 shows a compositional bias: basic and acidic residues; it reads VEKHKEKQRQLEEEKRRQKIEM. A compositionally biased stretch (gly residues) spans 160–174; sequence RGGGYNPLTGEGGGT. U189 is a non-standard amino acid (selenocysteine).

The protein belongs to the selenoprotein S family. In terms of assembly, interacts with DERL1 and (via VIM motif) with VCP, suggesting that it forms a membrane complex with DERL1 that serves as a receptor for VCP. Also interacts with DERL2, DERL3 and SELENOK. The SELENOK-SELENOS complex interacts with VCP. Interacts with CCDC47. Truncated SELENOS proteins produced by failed UGA/Sec decoding are ubiquitinated by the CRL2(KLHDC2) and CRL2(KLHDC3) complexes, which recognizes the glycine (Gly) at the C-terminus of truncated SELENOS proteins. Truncated SELENOS proteins produced by failed UGA/Sec decoding are also ubiquitinated by the CRL5(KLHDC1) complex.

It is found in the endoplasmic reticulum membrane. The protein resides in the cytoplasm. Its function is as follows. Involved in the degradation process of misfolded endoplasmic reticulum (ER) luminal proteins. Participates in the transfer of misfolded proteins from the ER to the cytosol, where they are destroyed by the proteasome in a ubiquitin-dependent manner. Probably acts by serving as a linker between DERL1, which mediates the retrotranslocation of misfolded proteins into the cytosol, and the ATPase complex VCP, which mediates the translocation and ubiquitination. The chain is Selenoprotein S from Rattus norvegicus (Rat).